A 332-amino-acid chain; its full sequence is MKEYDIIIVGGGPIGLFATFYSGLRDMSALLIDAQDELGGQLVTIYPEKMVYDVGGYPGILAYDLAQNLIEQAKMFSPDIRLKEWVDWITRTQDNLWVIKTDKGNEFKAKTILLALGIGRITPSRLGAGGEIEYENRGVYYTVKRKKDFEEKRILIVGGGDSAVDWAINLAPVAKSITLIHRRDQFRAHESSVKQLYNIASVHTWHELKEVKGDGSKVTQAVIFDNRTKEEKTLDVDAVIISIGHKGDLGNVPRWGLNMKGRDILVNAKMETNLPGVYAAGDIASQEGVPKMALIAIGFSEAAIATSMAKKYIDPNVSIFGGHSSEIMKSRS.

The FAD site is built by D33, Q41, Y46, V86, I121, D282, and S325.

It belongs to the ferredoxin--NADP reductase type 2 family. In terms of assembly, homodimer. FAD serves as cofactor.

It catalyses the reaction 2 reduced [2Fe-2S]-[ferredoxin] + NADP(+) + H(+) = 2 oxidized [2Fe-2S]-[ferredoxin] + NADPH. This Sulfolobus acidocaldarius (strain ATCC 33909 / DSM 639 / JCM 8929 / NBRC 15157 / NCIMB 11770) protein is Ferredoxin--NADP reductase 2.